A 526-amino-acid polypeptide reads, in one-letter code: Cytochrome P450 monooxygenase ucsK (526 aa).

Residues Pro7–Tyr27 traverse the membrane as a helical segment. Asn403 is a glycosylation site (N-linked (GlcNAc...) asparagine). Cys467 contributes to the heme binding site.

This sequence belongs to the cytochrome P450 family. Heme serves as cofactor.

It localises to the membrane. The protein operates within mycotoxin biosynthesis. In terms of biological role, cytochrome P450 monooxygenase; part of the gene cluster that mediates the biosynthesis of UCS1025A, a member of the pyrrolizidinone family that acts as a strong telomerase inhibitor and displays potent antibacterial and antitumor properties. These compounds share a hemiaminal-containing pyrrolizidinone core fused with a gamma-lactone, giving a furopyrrolizidine that is connected to a decalin fragment. The polyketide synthase module (PKS) of the PKS-NRPS ucsA is responsible for the synthesis of the polyketide backbone via the condensation of an acetyl-CoA starter unit with 6 malonyl-CoA units. The downstream nonribosomal peptide synthetase (NRPS) module then amidates the carboxyl end of the polyketide with a 2S,3S-methylproline derived from L-isoleucine by the 2-oxoglutarate-dependent dioxygenase ucsF which converts L-isoleucine to (4S,5S)-4-methylpyrroline-5-carboxylate that is further converted to 2S,3S-methylproline by the pyrroline-5-carboxylate reductase ucsG. Reductive release of the completed aminoacyl polyketide from the assembly line can form the 3-pyrrolin-2-one structure via an intramolecular Knoevenagel reaction. Because ucsA lacks a designated enoylreductase (ER) domain, the required activity is provided the enoyl reductase ucsL. This keto acyclic precursor is the substrate of the Diels-Alderase ucsH, that catalyzes the Diels-Alder cycloaddition. Oxidation of the 3S-methyl group to a carboxylate by the cytochrome P450 monooxygenase ucsK allows an oxa-Michael cyclization that might involve the reductase/dehydrogenase ucsI and which furnishes the furopyrrolizidine. The oxidase ucsJ likely plays a critical role in stereoselective reduction of the C5-C6 double bond to afford the required R-configured carboxylate group. Further enolization and oxidation at C5 by an unidentified enzyme affords the last intermediate that can undergo oxa-Michael cyclization to yield UCS1025A. This is Cytochrome P450 monooxygenase ucsK from Acremonium sp.